A 644-amino-acid chain; its full sequence is Exoribonuclease 2 (644 aa).

In terms of domain architecture, RNB spans 189 to 516; sequence REDLTALDFV…NHRLLKAVIK (328 aa). One can recognise an S1 motif domain in the interval 561–643; the sequence is DTRFAAEIVD…ETRSIIARPV (83 aa).

This sequence belongs to the RNR ribonuclease family. RNase II subfamily.

It localises to the cytoplasm. The catalysed reaction is Exonucleolytic cleavage in the 3'- to 5'-direction to yield nucleoside 5'-phosphates.. In terms of biological role, involved in mRNA degradation. Hydrolyzes single-stranded polyribonucleotides processively in the 3' to 5' direction. The protein is Exoribonuclease 2 of Escherichia coli O6:K15:H31 (strain 536 / UPEC).